We begin with the raw amino-acid sequence, 236 residues long: UPF0257 lipoprotein YnfC (236 aa).

Positions 1–16 (MKYKLLPCLLAILLTG) are cleaved as a signal peptide. C17 is lipidated: N-palmitoyl cysteine. Residue C17 is the site of S-diacylglycerol cysteine attachment.

Belongs to the UPF0257 family.

The protein localises to the cell membrane. This Escherichia coli O81 (strain ED1a) protein is UPF0257 lipoprotein YnfC.